Here is a 278-residue protein sequence, read N- to C-terminus: Diaminopimelate epimerase (278 aa).

Residues Asn-13, Gln-46, and Asn-67 each contribute to the substrate site. Residue Cys-76 is the Proton donor of the active site. Residues 77-78 (GN), Asn-160, Asn-193, and 211-212 (ER) each bind substrate. The active-site Proton acceptor is the Cys-220. Residue 221 to 222 (GT) participates in substrate binding.

The protein belongs to the diaminopimelate epimerase family. As to quaternary structure, homodimer.

It localises to the cytoplasm. The catalysed reaction is (2S,6S)-2,6-diaminopimelate = meso-2,6-diaminopimelate. It functions in the pathway amino-acid biosynthesis; L-lysine biosynthesis via DAP pathway; DL-2,6-diaminopimelate from LL-2,6-diaminopimelate: step 1/1. Its function is as follows. Catalyzes the stereoinversion of LL-2,6-diaminopimelate (L,L-DAP) to meso-diaminopimelate (meso-DAP), a precursor of L-lysine and an essential component of the bacterial peptidoglycan. This is Diaminopimelate epimerase from Thioalkalivibrio sulfidiphilus (strain HL-EbGR7).